A 344-amino-acid chain; its full sequence is Dihydroorotase (344 aa).

Residues H13 and H15 each coordinate Zn(2+). Substrate-binding positions include 15-17 and N41; that span reads HVR. Zn(2+)-binding residues include K99, H136, and H174. K99 is modified (N6-carboxylysine). H136 contributes to the substrate binding site. L219 serves as a coordination point for substrate. D247 lines the Zn(2+) pocket. D247 is an active-site residue. Substrate-binding residues include H251 and A263.

The protein belongs to the metallo-dependent hydrolases superfamily. DHOase family. Class II DHOase subfamily. As to quaternary structure, homodimer. The cofactor is Zn(2+).

It catalyses the reaction (S)-dihydroorotate + H2O = N-carbamoyl-L-aspartate + H(+). Its pathway is pyrimidine metabolism; UMP biosynthesis via de novo pathway; (S)-dihydroorotate from bicarbonate: step 3/3. In terms of biological role, catalyzes the reversible cyclization of carbamoyl aspartate to dihydroorotate. This Azoarcus sp. (strain BH72) protein is Dihydroorotase.